Here is a 320-residue protein sequence, read N- to C-terminus: Cytochrome c biogenesis protein CcsA (320 aa).

The next 8 membrane-spanning stretches (helical) occupy residues 13–33, 46–66, 73–93, 102–122, 147–167, 226–246, 259–274, and 289–309; these read ISFSVVSIVITIHFLTLFLLV, GMIVTFFCITGLLVTRWIYSG, LYESLIFLSWGFSLIHMVSYL, LSAITAPSAIFTQGFATSGLL, MVLGYAALLCGSLLSVALLVI, IISLGFIFLTIGILSGAVWAN, ETWAFITWTVFAIYFH, and VASMGFLIIWICYFGVNLLGI.

This sequence belongs to the CcmF/CycK/Ccl1/NrfE/CcsA family. May interact with Ccs1.

The protein localises to the plastid. It localises to the chloroplast thylakoid membrane. Required during biogenesis of c-type cytochromes (cytochrome c6 and cytochrome f) at the step of heme attachment. In Gossypium hirsutum (Upland cotton), this protein is Cytochrome c biogenesis protein CcsA.